We begin with the raw amino-acid sequence, 411 residues long: Fructose-1,6-bisphosphatase, chloroplastic (411 aa).

The N-terminal 53 residues, 1–53 (MAATAGATPSSHLLLSSSRHVAASPQPRILFPSLSGKRVAVGKNHHATGVRCM), are a transit peptide targeting the chloroplast. 5 residues coordinate Mg(2+): Glu-133, Glu-162, Asp-183, Leu-185, and Asp-186. 186–189 (DGSS) provides a ligand contact to substrate. Cys-227 and Cys-232 are oxidised to a cystine. Substrate-binding residues include Asn-291, Tyr-323, Tyr-341, Tyr-343, and Lys-353. Position 359 (Glu-359) interacts with Mg(2+).

Belongs to the FBPase class 1 family. Homotetramer. Mg(2+) serves as cofactor.

It is found in the plastid. The protein localises to the chloroplast stroma. The enzyme catalyses beta-D-fructose 1,6-bisphosphate + H2O = beta-D-fructose 6-phosphate + phosphate. The protein operates within carbohydrate biosynthesis; Calvin cycle. This Brassica napus (Rape) protein is Fructose-1,6-bisphosphatase, chloroplastic (FBP).